The primary structure comprises 501 residues: Beta-secretase 1 (501 aa).

An N-terminal signal peptide occupies residues 1–21 (MAQALPWLLLWMGSGVLPAHG). Residues 22-45 (SQPGIRLPLRSGLGGAPLGLRLPR) constitute a propeptide that is removed on maturation. The Extracellular portion of the chain corresponds to 22–457 (SQPGIRLPLR…PQTDESTLMT (436 aa)). The tract at residues 39 to 58 (LGLRLPRETDEESEEPGRRG) is disordered. The Peptidase A1 domain maps to 75-416 (YYVEMTLGSP…DRARKRIGFA (342 aa)). D93 is a catalytic residue. K126 carries the post-translational modification N6-acetyllysine. 3 N-linked (GlcNAc...) asparagine glycosylation sites follow: N153, N172, and N223. Disulfide bonds link C216–C420, C278–C443, and C330–C380. Residues K275, K279, and K285 each carry the N6-acetyllysine modification. D289 is an active-site residue. Residues K299, K300, and K307 each carry the N6-acetyllysine modification. N354 is a glycosylation site (N-linked (GlcNAc...) asparagine). A helical membrane pass occupies residues 458 to 478 (IAYVMAAICALFMLPLCLMVC). 4 S-palmitoyl cysteine lipidation sites follow: C474, C478, C482, and C485. Residues 479–501 (QWRCLRCLRHQHDDFADDISLLK) lie on the Cytoplasmic side of the membrane. Positions 479–501 (QWRCLRCLRHQHDDFADDISLLK) are interaction with RTN3. The DXXLL motif lies at 496–500 (DISLL). Residue S498 is modified to Phosphoserine. A Glycyl lysine isopeptide (Lys-Gly) (interchain with G-Cter in ubiquitin) cross-link involves residue K501.

This sequence belongs to the peptidase A1 family. Monomer. Interacts (via DXXLL motif) with GGA1, GGA2 and GGA3 (via their VHS domain); the interaction highly increases when BACE1 is phosphorylated at Ser-498. Interacts with RTN1; RTN2; RTN3 and RTN4; the interaction leads to inhibition of amyloid precursor protein processing. Interacts with SNX6. Interacts with PCSK9. Interacts with NAT8 and NAT8B. Interacts with BIN1. Interacts (via extracellular domain) with ADAM10 (via extracellular domain). Interacts with SORL1; this interaction may affect binding with APP and hence reduce APP cleavage. Interacts with NRDC AND NRG1. Post-translationally, palmitoylation mediates lipid raft localization. Acetylated in the endoplasmic reticulum at Lys-126, Lys-275, Lys-279, Lys-285, Lys-299, Lys-300 and Lys-307. Acetylation by NAT8 and NAT8B is transient and deacetylation probably occurs in the Golgi. Acetylation regulates the maturation, the transport to the plasma membrane, the stability and the expression of the protein. In terms of processing, ubiquitinated at Lys-501, ubiquitination leads to lysosomal degradation. Monoubiquitinated and 'Lys-63'-linked polyubitinated. Deubiquitnated by USP8; inhibits lysosomal degradation. Post-translationally, phosphorylation at Ser-498 is required for interaction with GGA1 and retrograded transport from endosomal compartments to the trans-Golgi network. Non-phosphorylated BACE1 enters a direct recycling route to the cell surface. N-Glycosylated. Addition of a bisecting N-acetylglucosamine by MGAT3 blocks lysosomal targeting, further degradation and is required for maintaining stability under stress conditions.

The protein localises to the cell membrane. The protein resides in the golgi apparatus. Its subcellular location is the trans-Golgi network. It localises to the endoplasmic reticulum. It is found in the endosome. The protein localises to the cell surface. The protein resides in the cytoplasmic vesicle membrane. Its subcellular location is the membrane raft. It localises to the lysosome. It is found in the late endosome. The protein localises to the early endosome. The protein resides in the recycling endosome. Its subcellular location is the cell projection. It localises to the axon. It is found in the dendrite. It catalyses the reaction Broad endopeptidase specificity. Cleaves Glu-Val-Asn-Leu-|-Asp-Ala-Glu-Phe in the Swedish variant of Alzheimer's amyloid precursor protein.. Inhibited by RTN3 and RTN4. Responsible for the proteolytic processing of the amyloid precursor protein (APP). Cleaves at the N-terminus of the A-beta peptide sequence, between residues 671 and 672 of APP, leads to the generation and extracellular release of beta-cleaved soluble APP, and a corresponding cell-associated C-terminal fragment which is later released by gamma-secretase. Cleaves CHL1. The protein is Beta-secretase 1 (BACE1) of Bos taurus (Bovine).